Here is a 123-residue protein sequence, read N- to C-terminus: Immunoglobulin lambda variable 9-49 (123 aa).

A signal peptide spans 1–19 (MAWAPLLLTLLSLLTGSLS). The segment at 20 to 44 (QPVLTQPPSASASLGASVTLTCTLS) is framework-1. In terms of domain architecture, Ig-like spans 21-123 (PVLTQPPSAS…ADHGSGSNFV (103 aa)). An intrachain disulfide couples C41 to C112. The tract at residues 45–51 (SGYSNYK) is complementarity-determining-1. The interval 52-68 (VDWYQQRPGKGPRFVMR) is framework-2. The tract at residues 69–76 (VGTGGIVG) is complementarity-determining-2. Residues 77–112 (SKGDGIPDRFSVLGSGLNRYLTIKNIQEEDESDYHC) are framework-3. Position 96 is a phosphotyrosine (Y96). Position 98 is a phosphothreonine (T98). A complementarity-determining-3 region spans residues 113–123 (GADHGSGSNFV).

Immunoglobulins are composed of two identical heavy chains and two identical light chains; disulfide-linked.

It is found in the secreted. Its subcellular location is the cell membrane. V region of the variable domain of immunoglobulin light chains that participates in the antigen recognition. Immunoglobulins, also known as antibodies, are membrane-bound or secreted glycoproteins produced by B lymphocytes. In the recognition phase of humoral immunity, the membrane-bound immunoglobulins serve as receptors which, upon binding of a specific antigen, trigger the clonal expansion and differentiation of B lymphocytes into immunoglobulins-secreting plasma cells. Secreted immunoglobulins mediate the effector phase of humoral immunity, which results in the elimination of bound antigens. The antigen binding site is formed by the variable domain of one heavy chain, together with that of its associated light chain. Thus, each immunoglobulin has two antigen binding sites with remarkable affinity for a particular antigen. The variable domains are assembled by a process called V-(D)-J rearrangement and can then be subjected to somatic hypermutations which, after exposure to antigen and selection, allow affinity maturation for a particular antigen. The chain is Immunoglobulin lambda variable 9-49 from Homo sapiens (Human).